A 182-amino-acid chain; its full sequence is MSRIGKMPIKVPPGVTVDIKGNDVTVKGPKGTLNRTFRPEVTITRDGDYLVVAPVGTDKAARSFFGLSRTLLDNMIVGVKDGFDKNLEIVGVGMRADKDGNNIIFKVGYSHTVTVAPPAGITLSVDGTTKVKVSGINKEEVSQMAAEIRSIRKPDHYMGKGIRYAGEYVRIKPGKAIGKGAK.

The protein belongs to the universal ribosomal protein uL6 family. As to quaternary structure, part of the 50S ribosomal subunit.

Its function is as follows. This protein binds to the 23S rRNA, and is important in its secondary structure. It is located near the subunit interface in the base of the L7/L12 stalk, and near the tRNA binding site of the peptidyltransferase center. The sequence is that of Large ribosomal subunit protein uL6 from Dehalococcoides mccartyi (strain ATCC BAA-2266 / KCTC 15142 / 195) (Dehalococcoides ethenogenes (strain 195)).